A 306-amino-acid chain; its full sequence is Ornithine carbamoyltransferase (306 aa).

Carbamoyl phosphate is bound by residues 50-53 (STRT), Q77, R101, and 128-131 (HPCQ). L-ornithine contacts are provided by residues N160, D224, and 228 to 229 (SM). Residues 261 to 262 (CL) and R289 contribute to the carbamoyl phosphate site.

This sequence belongs to the aspartate/ornithine carbamoyltransferase superfamily. OTCase family.

Its subcellular location is the cytoplasm. It catalyses the reaction carbamoyl phosphate + L-ornithine = L-citrulline + phosphate + H(+). It participates in amino-acid biosynthesis; L-arginine biosynthesis; L-arginine from L-ornithine and carbamoyl phosphate: step 1/3. Its function is as follows. Reversibly catalyzes the transfer of the carbamoyl group from carbamoyl phosphate (CP) to the N(epsilon) atom of ornithine (ORN) to produce L-citrulline. The sequence is that of Ornithine carbamoyltransferase from Aquifex aeolicus (strain VF5).